The following is a 28-amino-acid chain: Metallothionein-like protein type 2 LSC210 (28 aa).

It belongs to the metallothionein superfamily. Type 15 family.

Its function is as follows. Metallothioneins have a high content of cysteine residues that bind various heavy metals. The sequence is that of Metallothionein-like protein type 2 LSC210 (LSC210) from Brassica napus (Rape).